The sequence spans 459 residues: Ribulose bisphosphate carboxylase (459 aa).

N111 is a substrate binding site. The active-site Proton acceptor is the K166. Position 168 (K168) interacts with substrate. Residues K191, D193, and E194 each coordinate Mg(2+). K191 is modified (N6-carboxylysine). H287 serves as the catalytic Proton acceptor. Substrate-binding residues include R288, H321, and S368.

Belongs to the RuBisCO large chain family. Type II subfamily. In terms of assembly, homodimer. The cofactor is Mg(2+).

The catalysed reaction is 2 (2R)-3-phosphoglycerate + 2 H(+) = D-ribulose 1,5-bisphosphate + CO2 + H2O. The enzyme catalyses D-ribulose 1,5-bisphosphate + O2 = 2-phosphoglycolate + (2R)-3-phosphoglycerate + 2 H(+). RuBisCO catalyzes two reactions: the carboxylation of D-ribulose 1,5-bisphosphate, the primary event in carbon dioxide fixation, as well as the oxidative fragmentation of the pentose substrate. Both reactions occur simultaneously and in competition at the same active site. The protein is Ribulose bisphosphate carboxylase of Cereibacter sphaeroides (strain ATCC 17029 / ATH 2.4.9) (Rhodobacter sphaeroides).